Here is a 299-residue protein sequence, read N- to C-terminus: Taste receptor type 2 member 45 (299 aa).

M1 is a topological domain (extracellular). A helical membrane pass occupies residues 2–22; the sequence is ITFLPIIFSILVVVTFVIGNF. Residues 23–55 are Cytoplasmic-facing; that stretch reads ANGFIALVNSTEWVKRQKISFADQIVTALAVSR. The chain crosses the membrane as a helical span at residues 56–76; that stretch reads VGLLWVLLLNWYSTVLNPAFC. The Extracellular portion of the chain corresponds to 77–98; it reads SVELRTTAYNIWAVTGHFSNWP. The helical transmembrane segment at 99–119 threads the bilayer; the sequence is ATSLSIFYLLKIANFSNLIFL. At 120–126 the chain is on the cytoplasmic side; the sequence is RLKRRVK. A helical membrane pass occupies residues 127-147; the sequence is SVILVVLLGPLLFLACHLFVV. Topologically, residues 148–178 are extracellular; sequence NMNQIVWTKEYEGNMTWKIKLRRAMYLSDTT. A glycan (N-linked (GlcNAc...) asparagine) is linked at N161. The helical transmembrane segment at 179–199 threads the bilayer; the sequence is VTMLANLVPFTVTLISFLLLV. Residues 200–229 lie on the Cytoplasmic side of the membrane; sequence CSLCKHLKKMQLHGKGSQDPSTKVHIKVLQ. Residues 230-250 form a helical membrane-spanning segment; that stretch reads TVISFFLLRAIYFVSVIISVW. The Extracellular portion of the chain corresponds to 251–259; the sequence is SFKNLENKP. The helical transmembrane segment at 260 to 280 threads the bilayer; it reads VFMFCQAIGFSCSSAHPFILI. Residues 281 to 299 are Cytoplasmic-facing; sequence WGNKKLKQTYLSVLWQMRY.

The protein belongs to the G-protein coupled receptor T2R family. As to expression, expressed in subsets of taste receptor cells of the tongue and exclusively in gustducin-positive cells.

The protein resides in the membrane. Functionally, receptor that may play a role in the perception of bitterness and is gustducin-linked. May play a role in sensing the chemical composition of the gastrointestinal content. The activity of this receptor may stimulate alpha gustducin, mediate PLC-beta-2 activation and lead to the gating of TRPM5. The protein is Taste receptor type 2 member 45 (TAS2R45) of Homo sapiens (Human).